Here is a 75-residue protein sequence, read N- to C-terminus: Caerin 1.11 (75 aa).

The first 22 residues, 1–22, serve as a signal peptide directing secretion; that stretch reads MASLKKSLFLVLFLGFVSVSIC. A propeptide spanning residues 23-49 is cleaved from the precursor; it reads EEEKRQEDEDEHEEEGENQEEGSEEKR. The interval 24 to 48 is disordered; the sequence is EEKRQEDEDEHEEEGENQEEGSEEK. Residues 30–45 show a composition bias toward acidic residues; the sequence is DEDEHEEEGENQEEGS. The residue at position 74 (leucine 74) is a Leucine amide.

Belongs to the frog skin active peptide (FSAP) family. Caerin subfamily. Expressed by the skin glands.

The protein resides in the secreted. It is found in the target cell membrane. Cationic amphipathic alpha-helical antimicrobial peptide with weak or no activity against both Gram-positive and Gram-negative bacteria. Is weakly active against E.coli (MIC=25 uM), E.cloacae (MIC=50 uM), K.pneumoniae (MIC=25 uM), and S.haemolyticus (MIC=50 uM). Has no activity against S.typhimurium, S.enteritidis, B.megaterium, and S.aureus (MIC&gt;100 uM). In Ranoidea caerulea (Green tree frog), this protein is Caerin 1.11.